A 296-amino-acid chain; its full sequence is Aquaporin NIP1-1 (296 aa).

Residue Met-1 is modified to N-acetylmethionine. The next 2 helical transmembrane spans lie at 57–77 (LIAE…SVVV) and 84–104 (VVTL…LIYS). An NPA 1 motif is present at residues 114-116 (NPA). Helical transmembrane passes span 136 to 156 (VISQ…LFGL), 180 to 200 (AFTM…GVAT), and 205 to 225 (IGEL…LIAA). Residues 233-235 (NPG) carry the NPA 2 motif. A helical transmembrane segment spans residues 249–269 (GIWIYLVAPTLGAIAGAWVYN). Ser-286 carries the post-translational modification Phosphoserine.

It belongs to the MIP/aquaporin (TC 1.A.8) family. NIP (TC 1.A.8.12) subfamily. In terms of tissue distribution, expressed in roots.

Its subcellular location is the membrane. Water channel probably required to promote glycerol permeability and water transport across cell membranes. In Arabidopsis thaliana (Mouse-ear cress), this protein is Aquaporin NIP1-1 (NIP1-1).